The sequence spans 452 residues: Probable glycine dehydrogenase (decarboxylating) subunit 1 (452 aa).

It belongs to the GcvP family. N-terminal subunit subfamily. The glycine cleavage system is composed of four proteins: P, T, L and H. In this organism, the P 'protein' is a heterodimer of two subunits.

The catalysed reaction is N(6)-[(R)-lipoyl]-L-lysyl-[glycine-cleavage complex H protein] + glycine + H(+) = N(6)-[(R)-S(8)-aminomethyldihydrolipoyl]-L-lysyl-[glycine-cleavage complex H protein] + CO2. Its function is as follows. The glycine cleavage system catalyzes the degradation of glycine. The P protein binds the alpha-amino group of glycine through its pyridoxal phosphate cofactor; CO(2) is released and the remaining methylamine moiety is then transferred to the lipoamide cofactor of the H protein. The sequence is that of Probable glycine dehydrogenase (decarboxylating) subunit 1 from Alcanivorax borkumensis (strain ATCC 700651 / DSM 11573 / NCIMB 13689 / SK2).